Reading from the N-terminus, the 278-residue chain is MGARLSRRRLPADPSLALDALPPELLVQVLSHVPPRSLVTRCRPVCRAWRDIVDGPTVWLLQLARDRSAEGRALYAVAQRCLPSNEDKEEFPLCALARYCLRAPFGRNLIFNSCGEQGFRGWEVEHGGNGWAIEKNLTPVPGAPSQTCFVTSFEWCSKRQLVDLVMEGVWQELLDSAQIEICVADWWGARENCGCVYQLRVRLLDVYEKEVVKFSASPDPVLQWTERGCRQVSHVFTNFGKGIRYVSFEQYGRDVSSWVGHYGALVTHSSVRVRIRLS.

In terms of domain architecture, F-box spans 15–62; sequence SLALDALPPELLVQVLSHVPPRSLVTRCRPVCRAWRDIVDGPTVWLLQ. Residues 99-275 form the FBA domain; it reads YCLRAPFGRN…VTHSSVRVRI (177 aa).

Part of a SCF (SKP1-cullin-F-box) protein ligase complex. Interacts with SKP1 and CUL1. Expressed in heart, skeletal muscle, liver and kidney. Expressed at lower levels in spleen and brain.

Its function is as follows. Substrate-recognition component of the SCF (SKP1-CUL1-F-box protein)-type E3 ubiquitin ligase complex. Able to recognize and bind denatured glycoproteins, which are modified with complex-type oligosaccharides. Also recognizes sulfated glycans. Does not bind high-mannose glycoproteins. In Homo sapiens (Human), this protein is F-box only protein 17 (FBXO17).